Here is a 314-residue protein sequence, read N- to C-terminus: uncharacterized protein (314 aa).

The tract at residues 1 to 71 (MAGNSQRRGA…QRAGRKADET (71 aa)) is disordered. Residues glycine 266, isoleucine 286, and leucine 295 each coordinate S-adenosyl-L-methionine.

The protein belongs to the class IV-like SAM-binding methyltransferase superfamily. RNA methyltransferase TrmH family.

This is an uncharacterized protein from Mycolicibacterium smegmatis (strain ATCC 700084 / mc(2)155) (Mycobacterium smegmatis).